Reading from the N-terminus, the 342-residue chain is Heat-inducible transcription repressor HrcA (342 aa).

This sequence belongs to the HrcA family.

Negative regulator of class I heat shock genes (grpE-dnaK-dnaJ and groELS operons). Prevents heat-shock induction of these operons. In Acholeplasma laidlawii, this protein is Heat-inducible transcription repressor HrcA.